Consider the following 284-residue polypeptide: 2-dehydro-3-deoxyphosphooctonate aldolase (284 aa).

Belongs to the KdsA family.

It is found in the cytoplasm. The catalysed reaction is D-arabinose 5-phosphate + phosphoenolpyruvate + H2O = 3-deoxy-alpha-D-manno-2-octulosonate-8-phosphate + phosphate. It participates in carbohydrate biosynthesis; 3-deoxy-D-manno-octulosonate biosynthesis; 3-deoxy-D-manno-octulosonate from D-ribulose 5-phosphate: step 2/3. It functions in the pathway bacterial outer membrane biogenesis; lipopolysaccharide biosynthesis. The sequence is that of 2-dehydro-3-deoxyphosphooctonate aldolase from Klebsiella pneumoniae subsp. pneumoniae (strain ATCC 700721 / MGH 78578).